The chain runs to 263 residues: Imidazole glycerol phosphate synthase subunit HisF (263 aa).

Catalysis depends on residues D11 and D130.

This sequence belongs to the HisA/HisF family. As to quaternary structure, heterodimer of HisH and HisF.

The protein resides in the cytoplasm. It catalyses the reaction 5-[(5-phospho-1-deoxy-D-ribulos-1-ylimino)methylamino]-1-(5-phospho-beta-D-ribosyl)imidazole-4-carboxamide + L-glutamine = D-erythro-1-(imidazol-4-yl)glycerol 3-phosphate + 5-amino-1-(5-phospho-beta-D-ribosyl)imidazole-4-carboxamide + L-glutamate + H(+). It participates in amino-acid biosynthesis; L-histidine biosynthesis; L-histidine from 5-phospho-alpha-D-ribose 1-diphosphate: step 5/9. Its function is as follows. IGPS catalyzes the conversion of PRFAR and glutamine to IGP, AICAR and glutamate. The HisF subunit catalyzes the cyclization activity that produces IGP and AICAR from PRFAR using the ammonia provided by the HisH subunit. The sequence is that of Imidazole glycerol phosphate synthase subunit HisF from Synechococcus sp. (strain CC9311).